Reading from the N-terminus, the 284-residue chain is uncharacterized protein (284 aa).

Positions 1–21 (MKTTMLMLVLLVCSYIHYVCA) are cleaved as a signal peptide. 3 helical membrane-spanning segments follow: residues 88-108 (AGPF…FLWA), 144-164 (ALGV…LGVW), and 212-232 (VFTT…SPTY).

Its subcellular location is the membrane. This is an uncharacterized protein from Schizosaccharomyces pombe (strain 972 / ATCC 24843) (Fission yeast).